We begin with the raw amino-acid sequence, 355 residues long: Ornithine transcarbamylase, mitochondrial (355 aa).

A mitochondrion-targeting transit peptide spans 1 to 35 (MLFINLRTLLNNAALRNGHNFVVRNFRCGQPVQDK). K71 bears the N6-acetyllysine; alternate mark. Position 71 is an N6-succinyllysine; alternate (K71). Residue K81 is modified to N6-succinyllysine. K89 bears the N6-acetyllysine; alternate mark. K89 bears the N6-succinyllysine; alternate mark. 91 to 95 (STRTR) contacts carbamoyl phosphate. At S134 the chain carries Phosphoserine. A carbamoyl phosphate-binding site is contributed by R142. Position 142 (R142) interacts with L-ornithine. Residue K145 is modified to N6-acetyllysine; alternate. K145 bears the N6-succinyllysine; alternate mark. H169 serves as a coordination point for carbamoyl phosphate. L-ornithine is bound at residue N200. N6-acetyllysine; alternate occurs at positions 222, 232, and 239. K222, K232, and K239 each carry N6-succinyllysine; alternate. At K244 the chain carries N6-acetyllysine. 264–268 (DTWIS) is a binding site for L-ornithine. 2 positions are modified to N6-succinyllysine: K275 and K290. The residue at position 293 (K293) is an N6-acetyllysine; alternate. K293 is subject to N6-succinyllysine; alternate. An L-ornithine-binding site is contributed by 303-306 (HCLP). C304 is an active-site residue. N6-acetyllysine; alternate is present on K308. K308 carries the N6-succinyllysine; alternate modification. R331 serves as a coordination point for carbamoyl phosphate. R331 contacts L-ornithine.

Belongs to the aspartate/ornithine carbamoyltransferase superfamily. OTCase family. As to quaternary structure, homotrimer. In terms of processing, acetylation at Lys-89 negatively regulates ornithine carbamoyltransferase activity in response to nutrient signals.

The protein resides in the mitochondrion matrix. It carries out the reaction carbamoyl phosphate + L-ornithine = L-citrulline + phosphate + H(+). It participates in nitrogen metabolism; urea cycle; L-citrulline from L-ornithine and carbamoyl phosphate: step 1/1. Its activity is regulated as follows. Negatively regulated by lysine acetylation. Catalyzes the second step of the urea cycle, the condensation of carbamoyl phosphate with L-ornithine to form L-citrulline. The urea cycle ensures the detoxification of ammonia by converting it to urea for excretion. This Ovis aries (Sheep) protein is Ornithine transcarbamylase, mitochondrial.